The chain runs to 460 residues: NADH-ubiquinone oxidoreductase chain 4 (460 aa).

13 consecutive transmembrane segments (helical) span residues 22–42 (WLWP…LLWF), 59–79 (IDPL…LMIL), 93–113 (QRIY…AFSA), 114–134 (TELI…LIII), 148–168 (TYFL…LLLM), 195–215 (FWWT…GVHL), 225–245 (PIAG…YGMM), 258–278 (MAYP…SICL), 286–306 (LIAY…MIQT), 310–330 (FAGA…LFCL), 351–371 (VMLP…LALP), 394–414 (ILLT…MFLM), and 440–460 (LHLI…GWTF).

Belongs to the complex I subunit 4 family.

The protein localises to the mitochondrion membrane. The catalysed reaction is a ubiquinone + NADH + 5 H(+)(in) = a ubiquinol + NAD(+) + 4 H(+)(out). Functionally, core subunit of the mitochondrial membrane respiratory chain NADH dehydrogenase (Complex I) that is believed to belong to the minimal assembly required for catalysis. Complex I functions in the transfer of electrons from NADH to the respiratory chain. The immediate electron acceptor for the enzyme is believed to be ubiquinone. The chain is NADH-ubiquinone oxidoreductase chain 4 (MT-ND4) from Squalus acanthias (Spiny dogfish).